Here is a 250-residue protein sequence, read N- to C-terminus: 2,3-bisphosphoglycerate-dependent phosphoglycerate mutase (250 aa).

Substrate contacts are provided by residues 8–15 (RHGESQWN), 21–22 (TG), Arg-60, 87–90 (ERHY), Lys-98, 114–115 (RR), and 183–184 (GN). His-9 serves as the catalytic Tele-phosphohistidine intermediate. Catalysis depends on Glu-87, which acts as the Proton donor/acceptor.

This sequence belongs to the phosphoglycerate mutase family. BPG-dependent PGAM subfamily. As to quaternary structure, homodimer.

It catalyses the reaction (2R)-2-phosphoglycerate = (2R)-3-phosphoglycerate. Its pathway is carbohydrate degradation; glycolysis; pyruvate from D-glyceraldehyde 3-phosphate: step 3/5. Catalyzes the interconversion of 2-phosphoglycerate and 3-phosphoglycerate. This is 2,3-bisphosphoglycerate-dependent phosphoglycerate mutase from Bordetella avium (strain 197N).